A 151-amino-acid polypeptide reads, in one-letter code: Aspartate carbamoyltransferase regulatory chain (151 aa).

Residues Cys108, Cys113, Cys136, and Cys139 each coordinate Zn(2+).

This sequence belongs to the PyrI family. As to quaternary structure, contains catalytic and regulatory chains. Zn(2+) is required as a cofactor.

Its function is as follows. Involved in allosteric regulation of aspartate carbamoyltransferase. This is Aspartate carbamoyltransferase regulatory chain from Porphyromonas gingivalis (strain ATCC 33277 / DSM 20709 / CIP 103683 / JCM 12257 / NCTC 11834 / 2561).